The primary structure comprises 259 residues: 5'-nucleotidase SurE (259 aa).

The a divalent metal cation site is built by Asp-8, Asp-9, Ser-40, and Asn-92.

Belongs to the SurE nucleotidase family. A divalent metal cation serves as cofactor.

Its subcellular location is the cytoplasm. It catalyses the reaction a ribonucleoside 5'-phosphate + H2O = a ribonucleoside + phosphate. Functionally, nucleotidase that shows phosphatase activity on nucleoside 5'-monophosphates. This chain is 5'-nucleotidase SurE, found in Xanthomonas axonopodis pv. citri (strain 306).